Consider the following 270-residue polypeptide: Aliphatic sulfonates import ATP-binding protein SsuB (270 aa).

Positions 17–238 constitute an ABC transporter domain; that stretch reads LAANDLRRTF…VRGSHRLAAL (222 aa). 49–56 lines the ATP pocket; it reads GRSGCGKS. A disordered region spans residues 250-270; the sequence is PGTPPEPEPVAPLPTHLRWAH. Over residues 251 to 261 the composition is skewed to pro residues; the sequence is GTPPEPEPVAP.

This sequence belongs to the ABC transporter superfamily. Aliphatic sulfonates importer (TC 3.A.1.17.2) family. In terms of assembly, the complex is composed of two ATP-binding proteins (SsuB), two transmembrane proteins (SsuC) and a solute-binding protein (SsuA).

It localises to the cell inner membrane. It carries out the reaction ATP + H2O + aliphatic sulfonate-[sulfonate-binding protein]Side 1 = ADP + phosphate + aliphatic sulfonateSide 2 + [sulfonate-binding protein]Side 1.. Part of the ABC transporter complex SsuABC involved in aliphatic sulfonates import. Responsible for energy coupling to the transport system. The sequence is that of Aliphatic sulfonates import ATP-binding protein SsuB from Pseudomonas entomophila (strain L48).